The chain runs to 104 residues: DNA-directed RNA polymerase subunit omega (104 aa).

This sequence belongs to the RNA polymerase subunit omega family. As to quaternary structure, the RNAP catalytic core consists of 2 alpha, 1 beta, 1 beta' and 1 omega subunit. When a sigma factor is associated with the core the holoenzyme is formed, which can initiate transcription.

The catalysed reaction is RNA(n) + a ribonucleoside 5'-triphosphate = RNA(n+1) + diphosphate. Its function is as follows. Promotes RNA polymerase assembly. Latches the N- and C-terminal regions of the beta' subunit thereby facilitating its interaction with the beta and alpha subunits. The polypeptide is DNA-directed RNA polymerase subunit omega (Streptococcus suis (strain 05ZYH33)).